The following is a 64-amino-acid chain: Conotoxin VnMLCL-033 (64 aa).

The first 19 residues, 1–19 (MLCLPVFIILLLLASPAAP), serve as a signal peptide directing secretion. Positions 20–43 (NPLQTRIQSNLIRAGPEDANIKTD) are excised as a propeptide. Isoleucine amide is present on I63.

Belongs to the conotoxin T superfamily. Expressed by the venom duct.

It localises to the secreted. The protein is Conotoxin VnMLCL-033 of Conus ventricosus (Mediterranean cone).